Consider the following 436-residue polypeptide: UPF0229 protein Meso_0256 (436 aa).

The disordered stretch occupies residues 53 to 110 (PMPARGTSEPTFRPDRSSGERGYILPGNKEFAPGDRLPKPGASGGEGGTGAGRGGSDD). Gly residues predominate over residues 94 to 106 (ASGGEGGTGAGRG).

It belongs to the UPF0229 family.

The chain is UPF0229 protein Meso_0256 from Chelativorans sp. (strain BNC1).